Reading from the N-terminus, the 1669-residue chain is MGPRLSVWLLLLPAALLLHEEHSRAAAKGGCAGSGCGKCDCHGVKGQKGERGLPGLQGVIGFPGMQGPEGPQGPPGQKGDTGEPGLPGTKGTRGPPGASGYPGNPGLPGIPGQDGPPGPPGIPGCNGTKGERGPLGPPGLPGFAGNPGPPGLPGMKGDPGEILGHVPGMLLKGERGFPGIPGTPGPPGLPGLQGPVGPPGFTGPPGPPGPPGPPGEKGQMGLSFQGPKGDKGDQGVSGPPGVPGQAQVQEKGDFATKGEKGQKGEPGFQGMPGVGEKGEPGKPGPRGKPGKDGDKGEKGSPGFPGEPGYPGLIGRQGPQGEKGEAGPPGPPGIVIGTGPLGEKGERGYPGTPGPRGEPGPKGFPGLPGQPGPPGLPVPGQAGAPGFPGERGEKGDRGFPGTSLPGPSGRDGLPGPPGSPGPPGQPGYTNGIVECQPGPPGDQGPPGIPGQPGFIGEIGEKGQKGESCLICDIDGYRGPPGPQGPPGEIGFPGQPGAKGDRGLPGRDGVAGVPGPQGTPGLIGQPGAKGEPGEFYFDLRLKGDKGDPGFPGQPGMPGRAGSPGRDGHPGLPGPKGSPGSVGLKGERGPPGGVGFPGSRGDTGPPGPPGYGPAGPIGDKGQAGFPGGPGSPGLPGPKGEPGKIVPLPGPPGAEGLPGSPGFPGPQGDRGFPGTPGRPGLPGEKGAVGQPGIGFPGPPGPKGVDGLPGDMGPPGTPGRPGFNGLPGNPGVQGQKGEPGVGLPGLKGLPGLPGIPGTPGEKGSIGVPGVPGEHGAIGPPGLQGIRGEPGPPGLPGSVGSPGVPGIGPPGARGPPGGQGPPGLSGPPGIKGEKGFPGFPGLDMPGPKGDKGAQGLPGITGQSGLPGLPGQQGAPGIPGFPGSKGEMGVMGTPGQPGSPGPVGAPGLPGEKGDHGFPGSSGPRGDPGLKGDKGDVGLPGKPGSMDKVDMGSMKGQKGDQGEKGQIGPIGEKGSRGDPGTPGVPGKDGQAGQPGQPGPKGDPGISGTPGAPGLPGPKGSVGGMGLPGTPGEKGVPGIPGPQGSPGLPGDKGAKGEKGQAGPPGIGIPGLRGEKGDQGIAGFPGSPGEKGEKGSIGIPGMPGSPGLKGSPGSVGYPGSPGLPGEKGDKGLPGLDGIPGVKGEAGLPGTPGPTGPAGQKGEPGSDGIPGSAGEKGEPGLPGRGFPGFPGAKGDKGSKGEVGFPGLAGSPGIPGSKGEQGFMGPPGPQGQPGLPGSPGHATEGPKGDRGPQGQPGLPGLPGPMGPPGLPGIDGVKGDKGNPGWPGAPGVPGPKGDPGFQGMPGIGGSPGITGSKGDMGPPGVPGFQGPKGLPGLQGIKGDQGDQGVPGAKGLPGPPGPPGPYDIIKGEPGLPGPEGPPGLKGLQGLPGPKGQQGVTGLVGIPGPPGIPGFDGAPGQKGEMGPAGPTGPRGFPGPPGPDGLPGSMGPPGTPSVDHGFLVTRHSQTIDDPQCPSGTKILYHGYSLLYVQGNERAHGQDLGTAGSCLRKFSTMPFLFCNINNVCNFASRNDYSYWLSTPEPMPMSMAPITGENIRPFISRCAVCEAPAMVMAVHSQTIQIPPCPSGWSSLWIGYSFVMHTSAGAEGSGQALASPGSCLEEFRSAPFIECHGRGTCNYYANAYSFWLATIERSEMFKKPTPSTLKAGELRTHVSRCQVCMRRT.

An N-terminal signal peptide occupies residues 1 to 27; it reads MGPRLSVWLLLLPAALLLHEEHSRAAA. The propeptide at 28 to 172 is N-terminal propeptide (7S domain); the sequence is KGGCAGSGCG…LGHVPGMLLK (145 aa). Disordered regions lie at residues 48–459, 504–1382, and 1404–1431; these read KGER…EIGE, GRDG…PKGQ, and PGQKGEMGPAGPTGPRGFPGPPGPDGLP. N126 carries an N-linked (GlcNAc...) asparagine glycan. The triple-helical region stretch occupies residues 173 to 1440; the sequence is GERGFPGIPG…PGSMGPPGTP (1268 aa). The segment covering 196–214 has biased composition (pro residues); the sequence is VGPPGFTGPPGPPGPPGPP. Residues P204, P207, and P210 each carry the 3-hydroxyproline modification. Over residues 234-249 the composition is skewed to low complexity; sequence QGVSGPPGVPGQAQVQ. Basic and acidic residues-rich tracts occupy residues 250-263 and 289-298; these read EKGDFATKGEKGQK and PGKDGDKGEK. Composition is skewed to pro residues over residues 367–376, 413–424, and 436–448; these read PGQPGPPGLP, PGPPGSPGPPGQ, and PGPPGDQGPPGIP. A compositionally biased stretch (basic and acidic residues) spans 535-545; sequence FDLRLKGDKGD. A compositionally biased stretch (gly residues) spans 586 to 595; sequence GPPGGVGFPG. 3-hydroxyproline occurs at positions 587 and 602. Position 603 is a 4-hydroxyproline (P603). 3-hydroxyproline is present on P605. Position 606 is a 4-hydroxyproline (P606). Residues 611–620 are compositionally biased toward low complexity; the sequence is AGPIGDKGQA. The span at 621-630 shows a compositional bias: gly residues; sequence GFPGGPGSPG. 4 positions are modified to 4-hydroxyproline: P623, P626, P629, and P632. P647 bears the 3-hydroxyproline mark. Gly residues predominate over residues 797–817; the sequence is GVPGIGPPGARGPPGGQGPPG. 2 stretches are compositionally biased toward low complexity: residues 856-875 and 977-986; these read QSGLPGLPGQQGAPGIPGFP and PGKDGQAGQP. The span at 1011–1020 shows a compositional bias: gly residues; sequence GSVGGMGLPG. A compositionally biased stretch (low complexity) spans 1086–1114; it reads SIGIPGMPGSPGLKGSPGSVGYPGSPGLP. Position 1214 is a 3-hydroxyproline (P1214). Pro residues predominate over residues 1247–1258; the sequence is PGLPGPMGPPGL. Residues 1290-1299 show a composition bias toward gly residues; it reads GMPGIGGSPG. The segment covering 1368–1382 has biased composition (low complexity); that stretch reads PGLKGLQGLPGPKGQ. P1424 carries the post-translational modification 3-hydroxyproline. A Collagen IV NC1 domain is found at 1445–1669; that stretch reads GFLVTRHSQT…SRCQVCMRRT (225 aa). 6 cysteine pairs are disulfide-bonded: C1460–C1551, C1493–C1548, C1505–C1511, C1570–C1665, C1604–C1662, and C1616–C1622. M1533 participates in a covalent cross-link: S-Lysyl-methionine sulfilimine (Met-Lys) (interchain with K-1651). Residue K1651 forms an S-Lysyl-methionine sulfilimine (Lys-Met) (interchain with M-1533) linkage.

Belongs to the type IV collagen family. As to quaternary structure, there are six type IV collagen isoforms, alpha 1(IV)-alpha 6(IV), each of which can form a triple helix structure with 2 other chains to generate type IV collagen network. Interacts with EFEMP2. Post-translationally, lysines at the third position of the tripeptide repeating unit (G-X-Y) are hydroxylated. The modified lysines can be O-glycosylated. Contains 4-hydroxyproline. Prolines at the third position of the tripeptide repeating unit (G-X-Y) are hydroxylated in some or all of the chains. In terms of processing, contains 3-hydroxyproline. This modification occurs on the first proline residue in the sequence motif Gly-Pro-Hyp, where Hyp is 4-hydroxyproline. Post-translationally, type IV collagens contain numerous cysteine residues which are involved in inter- and intramolecular disulfide bonding. 12 of these, located in the NC1 domain, are conserved in all known type IV collagens. The trimeric structure of the NC1 domains is stabilized by covalent bonds (sulfilimine cross-links) between Lys and Met residues. These cross-links are important for the mechanical stability of the basement membrane. Sulfilimine cross-link is catalyzed by PXDN. In terms of processing, proteolytic processing produces the C-terminal NC1 peptide, arresten. As to expression, highly expressed in placenta.

It is found in the secreted. The protein localises to the extracellular space. The protein resides in the extracellular matrix. It localises to the basement membrane. Type IV collagen is the major structural component of glomerular basement membranes (GBM), forming a 'chicken-wire' meshwork together with laminins, proteoglycans and entactin/nidogen. Functionally, arresten, comprising the C-terminal NC1 domain, inhibits angiogenesis and tumor formation. The C-terminal half is found to possess the anti-angiogenic activity. Specifically inhibits endothelial cell proliferation, migration and tube formation. The polypeptide is Collagen alpha-1(IV) chain (Homo sapiens (Human)).